The following is a 291-amino-acid chain: MAKGRVAERSQTEMLHSTPAGDRAVGTQGSAAPGNKDHLKEKPCVEAGSARTSLLILVSIFSCAAFVMFLVYKNFPQLSEEERVNMKVPRDMDDAKALGKVLSKYKDTFYVQVLVAYFATYIFLQTFAIPGSIFLSILSGFLYPFPLALFLVCLCSGLGASFCYMLSYLVGRPVVYKYLTEKAVKWSQQVERHREHLINYIIFLRITPFLPNWFINITSPVINVPLKVFFIGTFLGVAPPSFVAIKAGTTLYQLTTAGEAVSWNSVFILMILALLSILPAIFQKKLKQKFE.

Basic and acidic residues predominate over residues 1 to 11; sequence MAKGRVAERSQ. Residues 1–38 form a disordered region; sequence MAKGRVAERSQTEMLHSTPAGDRAVGTQGSAAPGNKDH. Phosphothreonine is present on threonine 18. 6 helical membrane passes run 52 to 72, 109 to 129, 147 to 169, 197 to 217, 225 to 245, and 262 to 282; these read TSLL…FLVY, FYVQ…TFAI, LALF…LSYL, LINY…FINI, PLKV…FVAI, and SWNS…PAIF. The interval 140–251 is VTT domain; required for its function in autophagy; sequence GFLYPFPLAL…FVAIKAGTTL (112 aa).

Belongs to the TMEM41 family. Interacts with VMP1. Interacts with COPA, COPB1, VDAC1 and ERLIN2. Interacts with ATG2A. Interacts with SURF4.

Its subcellular location is the endoplasmic reticulum membrane. The protein localises to the endomembrane system. The enzyme catalyses a 1,2-diacyl-sn-glycero-3-phospho-L-serine(in) = a 1,2-diacyl-sn-glycero-3-phospho-L-serine(out). The catalysed reaction is cholesterol(in) = cholesterol(out). It carries out the reaction a 1,2-diacyl-sn-glycero-3-phosphocholine(in) = a 1,2-diacyl-sn-glycero-3-phosphocholine(out). It catalyses the reaction a 1,2-diacyl-sn-glycero-3-phosphoethanolamine(in) = a 1,2-diacyl-sn-glycero-3-phosphoethanolamine(out). Functionally, phospholipid scramblase involved in lipid homeostasis and membrane dynamics processes. Has phospholipid scramblase activity toward cholesterol and phosphatidylserine, as well as phosphatidylethanolamine and phosphatidylcholine. Required for autophagosome formation: participates in early stages of autophagosome biogenesis at the endoplasmic reticulum (ER) membrane by reequilibrating the leaflets of the ER as lipids are extracted by ATG2 (ATG2A or ATG2B) to mediate autophagosome assembly. In addition to autophagy, involved in other processes in which phospholipid scramblase activity is required. Required for normal motor neuron development. This is Transmembrane protein 41B from Rattus norvegicus (Rat).